Consider the following 476-residue polypeptide: Ribulose bisphosphate carboxylase large chain (476 aa).

N124 and T174 together coordinate substrate. The Proton acceptor role is filled by K176. Substrate is bound at residue K178. Mg(2+)-binding residues include K202, D204, and E205. N6-carboxylysine is present on K202. The active-site Proton acceptor is the H295. Residues R296, H328, and S380 each contribute to the substrate site.

This sequence belongs to the RuBisCO large chain family. Type I subfamily. Heterohexadecamer of 8 large chains and 8 small chains; disulfide-linked. The disulfide link is formed within the large subunit homodimers. Forms complexes of many stoichiometries with Raf1 with and without RbcS. RuBisCO interacts with the C-terminus of CcmM. Mg(2+) serves as cofactor. Post-translationally, the disulfide bond which can form in the large chain dimeric partners within the hexadecamer appears to be associated with oxidative stress and protein turnover.

It is found in the carboxysome. It carries out the reaction 2 (2R)-3-phosphoglycerate + 2 H(+) = D-ribulose 1,5-bisphosphate + CO2 + H2O. The catalysed reaction is D-ribulose 1,5-bisphosphate + O2 = 2-phosphoglycolate + (2R)-3-phosphoglycerate + 2 H(+). RuBisCO catalyzes two reactions: the carboxylation of D-ribulose 1,5-bisphosphate, the primary event in carbon dioxide fixation, as well as the oxidative fragmentation of the pentose substrate in the photorespiration process. Both reactions occur simultaneously and in competition at the same active site. This Nostoc sp. (strain PCC 7120 / SAG 25.82 / UTEX 2576) protein is Ribulose bisphosphate carboxylase large chain.